Reading from the N-terminus, the 455-residue chain is Argininosuccinate lyase (455 aa).

It belongs to the lyase 1 family. Argininosuccinate lyase subfamily.

The protein resides in the cytoplasm. The catalysed reaction is 2-(N(omega)-L-arginino)succinate = fumarate + L-arginine. It participates in amino-acid biosynthesis; L-arginine biosynthesis; L-arginine from L-ornithine and carbamoyl phosphate: step 3/3. This chain is Argininosuccinate lyase, found in Shewanella baltica (strain OS155 / ATCC BAA-1091).